A 191-amino-acid polypeptide reads, in one-letter code: Large ribosomal subunit protein uL3 (191 aa).

Positions 119–138 are disordered; it reads AAHGSRFHRRPGSIGNREWP.

This sequence belongs to the universal ribosomal protein uL3 family. Part of the 50S ribosomal subunit. Forms a cluster with proteins L14 and L19.

One of the primary rRNA binding proteins, it binds directly near the 3'-end of the 23S rRNA, where it nucleates assembly of the 50S subunit. In Helicobacter pylori (strain ATCC 700392 / 26695) (Campylobacter pylori), this protein is Large ribosomal subunit protein uL3 (rplC).